A 237-amino-acid chain; its full sequence is MKITWLGHAAFRVETAKAVILIDPFLNGNPGAKGIDFKEATRGVTHIALTHGHGDHVGDTVAIAREHGATVIANADLASWLGSQGVEKLDPGNTGGTLAHEGFTITFVNALHSSAMLTENGVSQALGNPNGLVFHFEDSPTLYHMGDTDIFSDMAFINELHQPEIGIVPIGDRFTMGGAVAALACQRYFNFNSVLPCHYASFPIIDRTADKFIAGMADHPATKVLADPAGTVHSFQA.

This sequence belongs to the UPF0173 family.

The chain is UPF0173 metal-dependent hydrolase BOV_A0561 from Brucella ovis (strain ATCC 25840 / 63/290 / NCTC 10512).